The primary structure comprises 496 residues: Cytochrome P450 3A56 (496 aa).

Cysteine 441 lines the heme pocket.

This sequence belongs to the cytochrome P450 family. Requires heme as cofactor. Highly expressed in liver and intestine. Moderate expression in gill and spleen. Low expression in kidney, brain and heart.

The protein localises to the endoplasmic reticulum membrane. The protein resides in the microsome membrane. It carries out the reaction an organic molecule + reduced [NADPH--hemoprotein reductase] + O2 = an alcohol + oxidized [NADPH--hemoprotein reductase] + H2O + H(+). Putative steroid 6-beta-hydroxylase. This is Cytochrome P450 3A56 (cyp3a56) from Fundulus heteroclitus (Killifish).